Reading from the N-terminus, the 427-residue chain is Serine/arginine (SR)-type shuttling mRNA binding protein GBP2 (427 aa).

Positions 1 to 101 (MERELGMYGN…GRGGGRGRTL (101 aa)) are disordered. The segment covering 22 to 32 (RLSDDRDRYDD) has biased composition (basic and acidic residues). A Phosphoserine modification is found at serine 24. A compositionally biased stretch (low complexity) spans 35–44 (DSSSNNGNGS). The segment covering 50–60 (DRGSRFNDRYD) has biased composition (basic and acidic residues). RRM domains follow at residues 122 to 198 (NSIF…QDNP) and 219 to 296 (FEVF…EGRF). Position 130 is a phosphothreonine (threonine 130). The segment covering 300-317 (KNNDRYNQRREDLEDTRG) has biased composition (basic and acidic residues). The tract at residues 300–319 (KNNDRYNQRREDLEDTRGTE) is disordered. Residues 349-426 (CFIYCSNLPF…CSLQISYARR (78 aa)) form the RRM 3 domain.

Methylated by HMT1.

The protein localises to the cytoplasm. It is found in the nucleus. The protein resides in the chromosome. It localises to the telomere. Its subcellular location is the P-body. The protein localises to the stress granule. Binds to intron-containing transcripts and is involved in quality control for the export of spliced mRNAs from the nucleus. Binds to pre-mRNAs until splicing is completed or until faulty mRNAs are degraded. On correctly spliced mRNAs, GBP2 and HRB1 recruit MEX67 to allow nuclear export. On faulty mRNAs, GBP2 and HRB1 associate with the TRAMP complex that guides those pre-mRNAs to the exosome for degradation. Binds single-stranded telomeric sequences of the type (TG[1-3])n in vitro. Influences the localization of RAP1 in the nuclei. Involved in modulating telomere length. The sequence is that of Serine/arginine (SR)-type shuttling mRNA binding protein GBP2 from Saccharomyces cerevisiae (strain ATCC 204508 / S288c) (Baker's yeast).